The following is a 232-amino-acid chain: Proteasome subunit alpha (232 aa).

This sequence belongs to the peptidase T1A family. As to quaternary structure, the 20S proteasome core is composed of 14 alpha and 14 beta subunits that assemble into four stacked heptameric rings, resulting in a barrel-shaped structure. The two inner rings, each composed of seven catalytic beta subunits, are sandwiched by two outer rings, each composed of seven alpha subunits. The catalytic chamber with the active sites is on the inside of the barrel. Has a gated structure, the ends of the cylinder being occluded by the N-termini of the alpha-subunits. Is capped by the proteasome-associated ATPase, ARC.

The protein resides in the cytoplasm. It participates in protein degradation; proteasomal Pup-dependent pathway. Its activity is regulated as follows. The formation of the proteasomal ATPase ARC-20S proteasome complex, likely via the docking of the C-termini of ARC into the intersubunit pockets in the alpha-rings, may trigger opening of the gate for substrate entry. Interconversion between the open-gate and close-gate conformations leads to a dynamic regulation of the 20S proteasome proteolysis activity. Functionally, component of the proteasome core, a large protease complex with broad specificity involved in protein degradation. This Acidimicrobium ferrooxidans (strain DSM 10331 / JCM 15462 / NBRC 103882 / ICP) protein is Proteasome subunit alpha.